Consider the following 306-residue polypeptide: Ribose-5-phosphate isomerase (306 aa).

A disordered region spans residues 45 to 68 (GRAQFGVGSTSTSSGDANSVCPAP). Residues 51 to 61 (VGSTSTSSGDA) are compositionally biased toward polar residues. Residue Ser-102 is modified to Phosphoserine.

Belongs to the ribose 5-phosphate isomerase family.

The catalysed reaction is aldehydo-D-ribose 5-phosphate = D-ribulose 5-phosphate. Its pathway is carbohydrate degradation; pentose phosphate pathway; D-ribose 5-phosphate from D-ribulose 5-phosphate (non-oxidative stage): step 1/1. In Sus scrofa (Pig), this protein is Ribose-5-phosphate isomerase.